The sequence spans 322 residues: Malate dehydrogenase (322 aa).

NAD(+) is bound by residues 10–15 (GSGQIG) and aspartate 34. Residues arginine 83 and arginine 89 each coordinate substrate. NAD(+)-binding positions include asparagine 96 and 119–121 (ITN). Substrate is bound by residues asparagine 121 and arginine 152. The active-site Proton acceptor is histidine 176.

The protein belongs to the LDH/MDH superfamily. MDH type 3 family.

The catalysed reaction is (S)-malate + NAD(+) = oxaloacetate + NADH + H(+). Functionally, catalyzes the reversible oxidation of malate to oxaloacetate. The protein is Malate dehydrogenase of Bradyrhizobium sp. (strain ORS 278).